Here is a 134-residue protein sequence, read N- to C-terminus: Major pollen allergen Lol p 11 (134 aa).

3 disulfide bridges follow: cysteine 14/cysteine 85, cysteine 17/cysteine 127, and cysteine 38/cysteine 73. A glycan (N-linked (GlcNAc...) asparagine) is linked at asparagine 24.

Belongs to the Ole e I family.

The protein resides in the secreted. The chain is Major pollen allergen Lol p 11 from Lolium perenne (Perennial ryegrass).